Consider the following 283-residue polypeptide: Orotidine 5'-phosphate decarboxylase (283 aa).

Lysine 97 (proton donor) is an active-site residue.

This sequence belongs to the OMP decarboxylase family. Type 2 subfamily.

It carries out the reaction orotidine 5'-phosphate + H(+) = UMP + CO2. The protein operates within pyrimidine metabolism; UMP biosynthesis via de novo pathway; UMP from orotate: step 2/2. This Clostridium botulinum (strain ATCC 19397 / Type A) protein is Orotidine 5'-phosphate decarboxylase.